The following is a 449-amino-acid chain: Biotin carboxylase (449 aa).

The Biotin carboxylation domain occupies 1–445; that stretch reads MLEKVLIANR…NIHYLEKKLG (445 aa). ATP-binding positions include lysine 116, lysine 159, 165-166, 201-204, histidine 209, and histidine 236; these read GG and EKFL. The region spanning 120–317 is the ATP-grasp domain; sequence KDAMKRAGVP…IVKEMLRIAS (198 aa). Lysine 238 is a binding site for hydrogencarbonate. Residues glutamate 276 and glutamate 288 each contribute to the ATP site. Residues glutamate 276, glutamate 288, and asparagine 290 each coordinate Mg(2+). Residues glutamate 276, glutamate 288, and asparagine 290 each coordinate Mn(2+). 3 residues coordinate hydrogencarbonate: arginine 292, valine 295, and arginine 338. Arginine 292 is an active-site residue. Residue arginine 338 participates in biotin binding.

Acetyl-CoA carboxylase is a heterohexamer of biotin carboxyl carrier protein, biotin carboxylase and the two subunits of carboxyl transferase in a 2:2 complex. Mg(2+) is required as a cofactor. Mn(2+) serves as cofactor.

It carries out the reaction N(6)-biotinyl-L-lysyl-[protein] + hydrogencarbonate + ATP = N(6)-carboxybiotinyl-L-lysyl-[protein] + ADP + phosphate + H(+). It functions in the pathway lipid metabolism; malonyl-CoA biosynthesis; malonyl-CoA from acetyl-CoA: step 1/1. This protein is a component of the acetyl coenzyme A carboxylase complex; first, biotin carboxylase catalyzes the carboxylation of the carrier protein and then the transcarboxylase transfers the carboxyl group to form malonyl-CoA. The chain is Biotin carboxylase (accC) from Pseudomonas aeruginosa (strain ATCC 15692 / DSM 22644 / CIP 104116 / JCM 14847 / LMG 12228 / 1C / PRS 101 / PAO1).